Here is a 342-residue protein sequence, read N- to C-terminus: N-acetyl-gamma-glutamyl-phosphate reductase (342 aa).

Cys-147 is a catalytic residue.

Belongs to the NAGSA dehydrogenase family. Type 1 subfamily.

The protein localises to the cytoplasm. It catalyses the reaction N-acetyl-L-glutamate 5-semialdehyde + phosphate + NADP(+) = N-acetyl-L-glutamyl 5-phosphate + NADPH + H(+). Its pathway is amino-acid biosynthesis; L-arginine biosynthesis; N(2)-acetyl-L-ornithine from L-glutamate: step 3/4. Its function is as follows. Catalyzes the NADPH-dependent reduction of N-acetyl-5-glutamyl phosphate to yield N-acetyl-L-glutamate 5-semialdehyde. The chain is N-acetyl-gamma-glutamyl-phosphate reductase from Campylobacter jejuni subsp. jejuni serotype O:23/36 (strain 81-176).